The primary structure comprises 515 residues: Monocarboxylate transporter 10 (515 aa).

The segment at 1 to 48 is disordered; sequence MVLSQEEPDSARGTSEAQPLGPAPTGAAPPPGPGPSDSPEAAVEKVEV. The Cytoplasmic portion of the chain corresponds to 1–66; sequence MVLSQEEPDS…EPHEPPEPPE (66 aa). The span at 17–26 shows a compositional bias: low complexity; sequence AQPLGPAPTG. Pro residues predominate over residues 27-36; the sequence is AAPPPGPGPS. A helical transmembrane segment spans residues 67–87; it reads GGWGWLVMLAAMWCNGSVFGI. The Extracellular portion of the chain corresponds to 88 to 114; it reads QNACGVLFVSMLETFGSKDDDKMVFKT. A helical transmembrane segment spans residues 115-135; that stretch reads AWVGSLSMGMIFFCCPIVSVF. Residues 136 to 144 are Cytoplasmic-facing; that stretch reads TDLFGCRKT. A helical transmembrane segment spans residues 145 to 165; the sequence is AVVGAAVGFVGLMSSSFVSSI. Residues 166-171 are Extracellular-facing; sequence EPLYLT. Residues 172 to 192 form a helical membrane-spanning segment; sequence YGIIFACGCSFAYQPSLVILG. The Cytoplasmic segment spans residues 193–200; the sequence is HYFKKRLG. A helical membrane pass occupies residues 201 to 221; that stretch reads LVNGIVTAGSSVFTILLPLLL. Residues 222–228 are Extracellular-facing; sequence RVLIDSV. Residues 229–249 traverse the membrane as a helical segment; sequence GLFYTLRVLCIFMFVLFLAGF. At 250–291 the chain is on the cytoplasmic side; that stretch reads TYRPLATSTKDKESGGSGSSLFSRKKFSPPKKIFNFAIFKVT. Serine 263 is subject to Phosphoserine. A helical transmembrane segment spans residues 292 to 312; it reads AYAVWAVGIPLALFGYFVPYV. Topologically, residues 313 to 329 are extracellular; the sequence is HLMKHVNERFQDEKNKE. Residues 330–350 traverse the membrane as a helical segment; the sequence is VVLMCIGVTSGVGRLLFGRIA. A topological domain (cytoplasmic) is located at residue aspartate 351. A helical membrane pass occupies residues 352–372; sequence YVPGVKKVYLQVLSFFFIGLM. Over 373–396 the chain is Extracellular; the sequence is SMMIPLCSIFGALIAVCLIMGLFD. Residues 397-417 form a helical membrane-spanning segment; it reads GCFISIMAPIAFELVGAQDVS. The Cytoplasmic segment spans residues 418 to 419; sequence QA. A helical membrane pass occupies residues 420-440; sequence IGFLLGFMSIPMTVGPPIAGL. The Extracellular portion of the chain corresponds to 441–451; sequence LRDKLGSYDVA. The helical transmembrane segment at 452-472 threads the bilayer; that stretch reads FYLAGVPPLIGGAVLCFIPWI. Residues 473 to 515 are Cytoplasmic-facing; it reads HSKKQREISKTTGKEKMEKMLENQNSLLSSSSGMFKKESDSII. Phosphoserine occurs at positions 498, 501, 503, and 504.

The protein belongs to the major facilitator superfamily. Monocarboxylate porter (TC 2.A.1.13) family. Not N-glycosylated. Strongly expressed in kidney and skeletal muscle and at lower level in placenta and heart.

Its subcellular location is the cell membrane. The protein localises to the basolateral cell membrane. It carries out the reaction 3,3',5-triiodo-L-thyronine(out) = 3,3',5-triiodo-L-thyronine(in). The enzyme catalyses L-thyroxine(out) = L-thyroxine(in). It catalyses the reaction L-tryptophan(in) = L-tryptophan(out). The catalysed reaction is L-tyrosine(in) = L-tyrosine(out). It carries out the reaction L-phenylalanine(in) = L-phenylalanine(out). Its function is as follows. Sodium- and proton-independent thyroid hormones and aromatic acids transporter. Mediates both uptake and efflux of 3,5,3'-triiodothyronine (T3) and 3,5,3',5'-tetraiodothyronine (T4) with high affinity, suggesting a role in the homeostasis of thyroid hormone levels. Responsible for low affinity bidirectional transport of the aromatic amino acids, such as phenylalanine, tyrosine, tryptophan and L-3,4-dihydroxyphenylalanine (L-dopa). Plays an important role in homeostasis of aromatic amino acids. This chain is Monocarboxylate transporter 10 (SLC16A10), found in Homo sapiens (Human).